We begin with the raw amino-acid sequence, 259 residues long: Virulence plasmid ParA family protein pGP5-D (259 aa).

9-16 provides a ligand contact to ATP; sequence FKGGTGKT.

This sequence belongs to the ParA family.

This Chlamydia psittaci (Chlamydophila psittaci) protein is Virulence plasmid ParA family protein pGP5-D.